We begin with the raw amino-acid sequence, 167 residues long: MLTYKSILIAVDGSHEAEWAFNKAVDVAKRNDAKLTVVNVIDSRTYSSYEVYDAQFTEKSKNFSDDLLKGYKEVATNAGVKNVETRLEFGSPKAIIPKKLATDVDADLIMCGTSGLNAVERFIVGSVSEAIVRHSPCDVLVVRTEELPEDFQPQVATDEFKSQYQAH.

This sequence belongs to the universal stress protein A family.

The protein localises to the cytoplasm. This is Putative universal stress protein SSP1056 from Staphylococcus saprophyticus subsp. saprophyticus (strain ATCC 15305 / DSM 20229 / NCIMB 8711 / NCTC 7292 / S-41).